Reading from the N-terminus, the 235-residue chain is Ribonuclease 3 (235 aa).

In terms of domain architecture, RNase III spans 6–131 (IDQLFKLTGH…LIAVMYLDGG (126 aa)). Mg(2+) is bound at residue glutamate 44. Aspartate 48 is an active-site residue. Aspartate 117 and glutamate 120 together coordinate Mg(2+). Glutamate 120 is a catalytic residue. The region spanning 156–225 (DAKTELQEWA…AEKILRREGV (70 aa)) is the DRBM domain.

The protein belongs to the ribonuclease III family. Homodimer. It depends on Mg(2+) as a cofactor.

The protein localises to the cytoplasm. The catalysed reaction is Endonucleolytic cleavage to 5'-phosphomonoester.. Its function is as follows. Digests double-stranded RNA. Involved in the processing of primary rRNA transcript to yield the immediate precursors to the large and small rRNAs (23S and 16S). Processes some mRNAs, and tRNAs when they are encoded in the rRNA operon. Processes pre-crRNA and tracrRNA of type II CRISPR loci if present in the organism. The chain is Ribonuclease 3 from Bartonella tribocorum (strain CIP 105476 / IBS 506).